Here is a 478-residue protein sequence, read N- to C-terminus: Sulfate adenylyltransferase subunit 1 (478 aa).

Positions 24–240 (KSLLRFLTCG…VLENVDIDAD (217 aa)) constitute a tr-type G domain. The interval 33-40 (GSVDDGKS) is G1. Residue 33-40 (GSVDDGKS) coordinates GTP. Residues 91 to 95 (GITID) form a G2 region. The tract at residues 112-115 (DTPG) is G3. GTP-binding positions include 112–116 (DTPGH) and 167–170 (NKMD). Positions 167–170 (NKMD) are G4. The tract at residues 206-208 (SAL) is G5.

The protein belongs to the TRAFAC class translation factor GTPase superfamily. Classic translation factor GTPase family. CysN/NodQ subfamily. Heterodimer composed of CysD, the smaller subunit, and CysN.

The catalysed reaction is sulfate + ATP + H(+) = adenosine 5'-phosphosulfate + diphosphate. It participates in sulfur metabolism; hydrogen sulfide biosynthesis; sulfite from sulfate: step 1/3. Functionally, with CysD forms the ATP sulfurylase (ATPS) that catalyzes the adenylation of sulfate producing adenosine 5'-phosphosulfate (APS) and diphosphate, the first enzymatic step in sulfur assimilation pathway. APS synthesis involves the formation of a high-energy phosphoric-sulfuric acid anhydride bond driven by GTP hydrolysis by CysN coupled to ATP hydrolysis by CysD. This chain is Sulfate adenylyltransferase subunit 1, found in Aliivibrio fischeri (strain MJ11) (Vibrio fischeri).